Reading from the N-terminus, the 104-residue chain is Phycoerythrin alpha-2 chain, chloroplastic (104 aa).

The N-terminal 37 residues, 1–37, are a transit peptide targeting the chloroplast; sequence MSAKIIAFSAVVATASAFAPTAGFVPRLRSGATSVNM. At Lys41 the chain carries 5-hydroxylysine. 15,16-dihydrobiliverdin is bound by residues Cys56 and Arg58. The segment at 61-63 is 15,16-dihydrobiliverdin chromophore; that stretch reads KEY. Lys78 is a binding site for 15,16-dihydrobiliverdin.

This sequence belongs to the phycoerythrin family. Heterotetramer of 2 different alpha chains and 2 identical beta chains. The subunit composition could comprise of any combination of 2 out of 4 different alpha units with an invariant beta unit. Post-translationally, contains one covalently linked 15,16-dihydrobiliverdin chromophore.

Its subcellular location is the plastid. The protein localises to the chloroplast thylakoid membrane. Its function is as follows. Light-harvesting photosynthetic tetrapyrrole chromophore-protein from the phycobiliprotein complex. This Rhodomonas sp. (strain CS 24) (Chroomonas sp. (strain CS24)) protein is Phycoerythrin alpha-2 chain, chloroplastic (cpeA2).